Consider the following 249-residue polypeptide: Uridylate kinase (249 aa).

15–18 lines the ATP pocket; the sequence is KLSG. The segment at 23–28 is involved in allosteric activation by GTP; sequence GEEGFG. Residue Gly-57 coordinates UMP. 2 residues coordinate ATP: Gly-58 and Arg-62. UMP contacts are provided by residues Asp-77 and 138–145; that span reads TGNPFFTT. 3 residues coordinate ATP: Thr-165, Phe-171, and Asp-174.

The protein belongs to the UMP kinase family. In terms of assembly, homohexamer.

It is found in the cytoplasm. It carries out the reaction UMP + ATP = UDP + ADP. It functions in the pathway pyrimidine metabolism; CTP biosynthesis via de novo pathway; UDP from UMP (UMPK route): step 1/1. With respect to regulation, allosterically activated by GTP. Inhibited by UTP. In terms of biological role, catalyzes the reversible phosphorylation of UMP to UDP. The protein is Uridylate kinase of Psychromonas ingrahamii (strain DSM 17664 / CCUG 51855 / 37).